Consider the following 146-residue polypeptide: DNA-directed RNA polymerase subunit beta (146 aa).

Belongs to the RNA polymerase beta chain family. As to quaternary structure, the RNAP catalytic core consists of 2 alpha, 1 beta, 1 beta' and 1 omega subunit. When a sigma factor is associated with the core the holoenzyme is formed, which can initiate transcription.

The enzyme catalyses RNA(n) + a ribonucleoside 5'-triphosphate = RNA(n+1) + diphosphate. In terms of biological role, DNA-dependent RNA polymerase catalyzes the transcription of DNA into RNA using the four ribonucleoside triphosphates as substrates. The polypeptide is DNA-directed RNA polymerase subunit beta (rpoB) (Liberibacter africanus (Citrus greening disease)).